The following is a 977-amino-acid chain: Macrophage colony-stimulating factor 1 receptor (977 aa).

An N-terminal signal peptide occupies residues 1–18 (MFFALLFLIGILLGQVQG). Topologically, residues 19-519 (WSEPRIRLSS…MEVSDQIFTS (501 aa)) are extracellular. Ig-like C2-type domains are found at residues 22–109 (PRIR…VHVF), 120–198 (PSTS…EKVS), 213–305 (PYVY…TQLL), 316–407 (PKLS…ASIT), and 408–513 (FDIK…MEVS). A disulfide bridge connects residues C48 and C92. Residues N98, N101, N154, N163, N244, N286, N298, N361, N424, and N455 are each glycosylated (N-linked (GlcNAc...) asparagine). 2 cysteine pairs are disulfide-bonded: C138-C187 and C234-C289. A disulfide bond links C430 and C495. A helical membrane pass occupies residues 520-540 (AMCGSTVAMVVLGLLLIFMIY). Topologically, residues 541–977 (KYKQKPRYEI…LMKPNNYQFC (437 aa)) are cytoplasmic. Residues 544 to 576 (QKPRYEIRWKIIEATNGNNYTFIDPTQLPYNEK) are regulatory juxtamembrane domain. Phosphotyrosine; by autocatalysis is present on Y563. Residues 584–917 (LKLGKTLGAG…KISQMIQRML (334 aa)) enclose the Protein kinase domain. Residues 590–598 (LGAGAFGKV) and K618 contribute to the ATP site. Phosphotyrosine; by autocatalysis is present on residues Y701 and Y725. D781 (proton acceptor) is an active-site residue. Residues 799–821 (DFGLARDIMNDSNYVVKGNARLP) form an activation loop region. Y812 and Y929 each carry phosphotyrosine; by autocatalysis. The interval 919–977 (ETSEQQDTQEYKNIPTEAEAEQQLESCDPVKHEDESFETSCDQEEEDQPLMKPNNYQFC) is disordered. A compositionally biased stretch (acidic residues) spans 953–966 (ESFETSCDQEEEDQ). Phosphotyrosine; by autocatalysis is present on Y974.

It belongs to the protein kinase superfamily. Tyr protein kinase family. CSF-1/PDGF receptor subfamily. As to quaternary structure, monomer. Homodimer. Interacts with CSF1. Post-translationally, autophosphorylated in response to CSF1 binding. autophosphorylation, leading to its degradation. In terms of processing, ubiquitinated. Becomes rapidly polyubiquitinated after autophosphorylation, leading to its degradation.

It is found in the cell membrane. It carries out the reaction L-tyrosyl-[protein] + ATP = O-phospho-L-tyrosyl-[protein] + ADP + H(+). Its activity is regulated as follows. Present in an inactive conformation in the absence of bound ligand. CSF1 binding leads to dimerization and activation by autophosphorylation on tyrosine residues. In terms of biological role, tyrosine-protein kinase that acts as a cell-surface receptor for CSF1 and plays an essential role in the regulation of survival, proliferation and differentiation of hematopoietic precursor cells, especially mononuclear phagocytes, such as macrophages and monocytes. Plays an important role in innate immunity and in inflammatory processes. Plays an important role in the regulation of osteoclast proliferation and differentiation, the regulation of bone resorption, and is required for normal bone development. Promotes reorganization of the actin cytoskeleton, regulates formation of membrane ruffles, cell adhesion and cell migration. Activates several signaling pathways in response to ligand binding. This is Macrophage colony-stimulating factor 1 receptor (csf1r) from Danio rerio (Zebrafish).